Here is a 259-residue protein sequence, read N- to C-terminus: Phosphate import ATP-binding protein PstB 1 (259 aa).

The ABC transporter domain occupies 13 to 254 (IQVRGLEFFY…PSKTQTEDYI (242 aa)). 45-52 (GPSGCGKS) provides a ligand contact to ATP.

This sequence belongs to the ABC transporter superfamily. Phosphate importer (TC 3.A.1.7) family. As to quaternary structure, the complex is composed of two ATP-binding proteins (PstB), two transmembrane proteins (PstC and PstA) and a solute-binding protein (PstS).

The protein localises to the cell inner membrane. The catalysed reaction is phosphate(out) + ATP + H2O = ADP + 2 phosphate(in) + H(+). Its function is as follows. Part of the ABC transporter complex PstSACB involved in phosphate import. Responsible for energy coupling to the transport system. This Pseudomonas syringae pv. tomato (strain ATCC BAA-871 / DC3000) protein is Phosphate import ATP-binding protein PstB 1.